Consider the following 73-residue polypeptide: Frenatin 3.1 (73 aa).

The signal sequence occupies residues 1 to 22 (MHFLKKSIFLVLFLGLVSLSIC). Positions 23–46 (EKEKREDQNEEEVDENEEASEEKR) are excised as a propeptide. A disordered region spans residues 25 to 45 (EKREDQNEEEVDENEEASEEK). Over residues 30–42 (QNEEEVDENEEAS) the composition is skewed to acidic residues.

Expressed by the skin glands.

Its subcellular location is the secreted. Antimicrobial peptide with activity against both Gram-positive and Gram-negative bacteria. The sequence is that of Frenatin 3.1 from Nyctimystes infrafrenatus (White-lipped tree frog).